A 1928-amino-acid chain; its full sequence is Myosin-1 (1928 aa).

Residues 8 to 71 (SSNMIVWIPD…RISDVFPVNP (64 aa)) enclose the Myosin N-terminal SH3-like domain. In terms of domain architecture, Myosin motor spans 75–791 (DKVENMSELT…VLADLEKQKD (717 aa)). Residue 180 to 187 (GESGAGKT) participates in ATP binding. The actin-binding stretch occupies residues 460 to 529 (IGLLDIAGFE…LQLTIDLIES (70 aa)). Residues 629-641 (SSSAGVEANISNQ) are compositionally biased toward polar residues. The tract at residues 629 to 657 (SSSAGVEANISNQEVKKSARTSTFKTTSS) is disordered. In terms of domain architecture, IQ spans 794–823 (LNNIMIKLTATIRGYTVRKEITYHLQKLKK). A coiled-coil region spans residues 856–1911 (SSNDMTRTKK…FWKSRYESTM (1056 aa)).

Belongs to the TRAFAC class myosin-kinesin ATPase superfamily. Myosin family.

Required for cell division. In Saccharomyces cerevisiae (strain ATCC 204508 / S288c) (Baker's yeast), this protein is Myosin-1 (MYO1).